Reading from the N-terminus, the 85-residue chain is Putative membrane protein insertion efficiency factor (85 aa).

The protein belongs to the UPF0161 family.

It is found in the cell inner membrane. Functionally, could be involved in insertion of integral membrane proteins into the membrane. The polypeptide is Putative membrane protein insertion efficiency factor (Shewanella sediminis (strain HAW-EB3)).